Here is a 174-residue protein sequence, read N- to C-terminus: Gamma-crystallin S (174 aa).

Beta/gamma crystallin 'Greek key' domains follow at residues 2–40 and 41–83; these read GRII…RVES and GAWV…KMIH. The interval 84–89 is connecting peptide; sequence FVSGSE. Beta/gamma crystallin 'Greek key' domains lie at 90–130 and 131–173; these read YKIQ…KVLD and GIWI…KRLM.

The protein belongs to the beta/gamma-crystallin family.

Crystallins are the dominant structural components of the vertebrate eye lens. The polypeptide is Gamma-crystallin S (crygs) (Cyprinus carpio (Common carp)).